A 1288-amino-acid chain; its full sequence is SH3 domain and tetratricopeptide repeat-containing protein 2 (1288 aa).

SH3 domains are found at residues 176–240 (EGHF…PLPL) and 268–331 (IGRG…PDSY). Positions 386–395 (NPPNDLSASQ) are enriched in polar residues. Disordered stretches follow at residues 386–405 (NPPN…VRPG) and 410–444 (EHQA…LPEP). 8 TPR repeats span residues 528–561 (ARLC…LNGA), 757–790 (RALC…GQLL), 836–869 (GVIY…AQEV), 1001–1037 (GRLL…FIDL), 1084–1118 (LKLY…LARR), 1119–1152 (LKAV…ATLA), 1166–1199 (LVAF…CPPW), and 1210–1244 (AKVY…AVLL).

As to expression, strongly expressed in brain and spinal cord. Expressed at equal level in spinal cord and sciatic nerve. Weakly expressed in striated muscle.

The chain is SH3 domain and tetratricopeptide repeat-containing protein 2 (SH3TC2) from Homo sapiens (Human).